The chain runs to 165 residues: Large ribosomal subunit protein uL11A (165 aa).

P2 carries the n,N-dimethylproline; by NTM1 modification. N6,N6,N6-trimethyllysine; by RKM2 occurs at positions 4 and 11. Phosphoserine occurs at positions 25 and 38. Position 67 is an N5-methylarginine; by RMT2 (R67). Glycyl lysine isopeptide (Lys-Gly) (interchain with G-Cter in ubiquitin) cross-links involve residues K130 and K146.

It belongs to the universal ribosomal protein uL11 family. Component of the large ribosomal subunit (LSU). Mature yeast ribosomes consist of a small (40S) and a large (60S) subunit. The 40S small subunit contains 1 molecule of ribosomal RNA (18S rRNA) and 33 different proteins (encoded by 57 genes). The large 60S subunit contains 3 rRNA molecules (25S, 5.8S and 5S rRNA) and 46 different proteins (encoded by 81 genes). In terms of processing, it appears that the main modified species for L12 contains 6 methyl groups, 2 on Pro-2, 3 on Lys-4 and 1 on Arg-67. Although not reproduced with a second method, methylation at Lys-11 cannot be ruled out.

It localises to the cytoplasm. Its function is as follows. Component of the ribosome, a large ribonucleoprotein complex responsible for the synthesis of proteins in the cell. The small ribosomal subunit (SSU) binds messenger RNAs (mRNAs) and translates the encoded message by selecting cognate aminoacyl-transfer RNA (tRNA) molecules. The large subunit (LSU) contains the ribosomal catalytic site termed the peptidyl transferase center (PTC), which catalyzes the formation of peptide bonds, thereby polymerizing the amino acids delivered by tRNAs into a polypeptide chain. The nascent polypeptides leave the ribosome through a tunnel in the LSU and interact with protein factors that function in enzymatic processing, targeting, and the membrane insertion of nascent chains at the exit of the ribosomal tunnel. The protein is Large ribosomal subunit protein uL11A of Saccharomyces cerevisiae (strain ATCC 204508 / S288c) (Baker's yeast).